The chain runs to 455 residues: Nuclear distribution protein nudF (455 aa).

The LisH domain occupies 9 to 41 (QAEELHKSMIAYLVASDLPDTAAALRREVNLSE). Positions 61–88 (TSIARLQKKIMDLESRNATLQSELDNST) form a coiled coil. WD repeat units lie at residues 113–154 (SHRD…RTLK), 156–196 (HTRA…KNIR), 200–239 (GHDH…CVKT), 242–281 (GHTD…NIEH), 287–347 (GHEN…LMTL), 349–388 (GHDS…KCVK), 392–438 (AHES…IQMR), and 440–455 (VVAT…IFAG). The segment at 408–431 (KNVPGGDGAAEGEGNDKNGAGSEN) is disordered.

It belongs to the WD repeat LIS1/nudF family. In terms of assembly, self-associates. Interacts with nudE and dynein.

Its subcellular location is the cytoplasm. The protein resides in the cytoskeleton. It is found in the spindle pole. Its function is as follows. Positively regulates the activity of the minus-end directed microtubule motor protein dynein. May enhance dynein-mediated microtubule sliding by targeting dynein to the microtubule plus end. Required for nuclear migration during vegetative growth as well as development. Required for retrograde early endosome (EE) transport from the hyphal tip. Required for localization of dynein to the mitotic spindle poles. Recruits additional proteins to the dynein complex at SPBs. The protein is Nuclear distribution protein nudF of Aspergillus flavus (strain ATCC 200026 / FGSC A1120 / IAM 13836 / NRRL 3357 / JCM 12722 / SRRC 167).